Reading from the N-terminus, the 688-residue chain is PHD finger protein 21A (688 aa).

Residue K65 forms a Glycyl lysine isopeptide (Lys-Gly) (interchain with G-Cter in SUMO2) linkage. Disordered regions lie at residues 78-127 and 327-373; these read SQSE…LTAS and PQTV…ENPQ. Residues 85–127 are compositionally biased toward low complexity; that stretch reads QTAQQQPLQPLQQQQPQQPQQQQQQQQQHAQQSAAAPPSLTAS. Residues 336–354 show a composition bias toward basic and acidic residues; that stretch reads SLEKQTVKSHPEAEEKQAE. Positions 434–446 form a DNA-binding region, a.T hook; sequence TRKRGRPPKYNAV. Residues 449-471 are disordered; sequence FGALTPTSPPSSHPDSPENEKTE. Residue T453 is modified to Phosphothreonine. S456 carries the post-translational modification Phosphoserine. The segment at 497–544 adopts a PHD-type zinc-finger fold; it reads EDFCSVCRKSGQLLMCDTCSRVYHLDCLEPPLKTIPKGMWICPRCQDQ. The stretch at 571 to 609 forms a coiled coil; sequence KEEEKQKLLKWSSDLKQEREQLEQKVKELSSSISKCMEM. The disordered stretch occupies residues 650 to 688; that stretch reads GALSNGPDCTPPANAASTPAPSPSSQSCTANCNQGEETK. Residues 660–679 are compositionally biased toward low complexity; sequence PPANAASTPAPSPSSQSCTA.

In terms of assembly, component of a BHC histone deacetylase complex that contains HDAC1, HDAC2, HMG20B/BRAF35, KDM1A, RCOR1/CoREST and PHF21A/BHC80. The BHC complex may also contain ZMYM2, ZNF217, ZMYM3, GSE1 and GTF2I. In the complex, it interacts directly with HDAC1, HDAC2, HMG20B/BRAF35, KDM1A and RCOR1/CoREST. In terms of tissue distribution, expressed in the brain and testis. Weakly or not expressed in other tissues tested. Localized throughout the central nervous system (CNS) in brain, including the cerebellum, hippocampus, and cortex. Notably present in neuronal cells of granular cell layer and dentate gyrus in cerebellum and hippocampus, respectively. In the seminiferous tubules, the signals it is present strongly in spermatocytes, and weakly in spermatogonia and round spermatids. In some cases, it is also observed solely in spermatocytes (at protein level).

It localises to the nucleus. Functionally, component of the BHC complex, a corepressor complex that represses transcription of neuron-specific genes in non-neuronal cells. The BHC complex is recruited at RE1/NRSE sites by REST and acts by deacetylating and demethylating specific sites on histones, thereby acting as a chromatin modifier. In the BHC complex, it may act as a scaffold. Inhibits KDM1A-mediated demethylation of 'Lys-4' of histone H3 in vitro, suggesting a role in demethylation regulation. The chain is PHD finger protein 21A from Mus musculus (Mouse).